Here is a 548-residue protein sequence, read N- to C-terminus: 2-succinyl-5-enolpyruvyl-6-hydroxy-3-cyclohexene-1-carboxylate synthase (548 aa).

Belongs to the TPP enzyme family. MenD subfamily. As to quaternary structure, homodimer. Requires Mg(2+) as cofactor. The cofactor is Mn(2+). Thiamine diphosphate serves as cofactor.

It catalyses the reaction isochorismate + 2-oxoglutarate + H(+) = 5-enolpyruvoyl-6-hydroxy-2-succinyl-cyclohex-3-ene-1-carboxylate + CO2. Its pathway is quinol/quinone metabolism; 1,4-dihydroxy-2-naphthoate biosynthesis; 1,4-dihydroxy-2-naphthoate from chorismate: step 2/7. It functions in the pathway quinol/quinone metabolism; menaquinone biosynthesis. Its function is as follows. Catalyzes the thiamine diphosphate-dependent decarboxylation of 2-oxoglutarate and the subsequent addition of the resulting succinic semialdehyde-thiamine pyrophosphate anion to isochorismate to yield 2-succinyl-5-enolpyruvyl-6-hydroxy-3-cyclohexene-1-carboxylate (SEPHCHC). The chain is 2-succinyl-5-enolpyruvyl-6-hydroxy-3-cyclohexene-1-carboxylate synthase from Mycolicibacterium vanbaalenii (strain DSM 7251 / JCM 13017 / BCRC 16820 / KCTC 9966 / NRRL B-24157 / PYR-1) (Mycobacterium vanbaalenii).